We begin with the raw amino-acid sequence, 221 residues long: MDESDLYRKWMRLVENLEREGIIKSEKVKRAFLRVPRYKFVSDRYKEYAHVDEPLPIPAGQTISAPHMVAIMLELAELEGGMNVLEVGAGSGWNAALIYELVKREVYTIERVSDLVEFARKNLERAGYKDKVHVIWGDGSKGYPPNAPYDRIIVTAGAPKVPEPLIEQLKVGGKLLIPVGSYHLWQELLEVIKLDEDNNTKIKNHGGVAFVPLIGEHGWRE.

The active site involves Ser-64.

Belongs to the methyltransferase superfamily. L-isoaspartyl/D-aspartyl protein methyltransferase family.

It localises to the cytoplasm. The catalysed reaction is [protein]-L-isoaspartate + S-adenosyl-L-methionine = [protein]-L-isoaspartate alpha-methyl ester + S-adenosyl-L-homocysteine. In terms of biological role, catalyzes the methyl esterification of L-isoaspartyl residues in peptides and proteins that result from spontaneous decomposition of normal L-aspartyl and L-asparaginyl residues. It plays a role in the repair and/or degradation of damaged proteins. The protein is Protein-L-isoaspartate O-methyltransferase of Thermococcus sibiricus (strain DSM 12597 / MM 739).